We begin with the raw amino-acid sequence, 177 residues long: CASP-like protein 4D1 (177 aa).

Topologically, residues 1–20 (MTAPTAPSMAAPPAPSMVSR) are cytoplasmic. The chain crosses the membrane as a helical span at residues 21-41 (MTALFLRVLTFAFLMVSLVIM). Over 42 to 66 (TTNTGTIEIGIDEFKVRSKDFYSYR) the chain is Extracellular. Residues 67-87 (YMLAAIAFGLTYTILQIALTL) form a helical membrane-spanning segment. Residues 88–107 (NHISKRNGAQTSGDGNLVFD) lie on the Cytoplasmic side of the membrane. Residues 108 to 128 (FYGDKVVSYILATGAAAAFGA) form a helical membrane-spanning segment. The Extracellular portion of the chain corresponds to 129-153 (TKELKTQLAGLGGDKFFNKGYASAS). A helical transmembrane segment spans residues 154 to 174 (LLLLGFVCTAILSVFSSYALP). The Cytoplasmic portion of the chain corresponds to 175–177 (KKV).

It belongs to the Casparian strip membrane proteins (CASP) family. In terms of assembly, homodimer and heterodimers.

It localises to the cell membrane. The protein is CASP-like protein 4D1 of Populus trichocarpa (Western balsam poplar).